Reading from the N-terminus, the 415-residue chain is Mitogen-activated protein kinase MPS1 (415 aa).

The Protein kinase domain occupies Tyr23 to Leu314. Residues Leu29–Val37 and Lys52 each bind ATP. The interval Gly363 to Gln394 is disordered.

This sequence belongs to the protein kinase superfamily. Ser/Thr protein kinase family. MAP kinase subfamily. As to quaternary structure, interacts with transcription factor MIG1. Interacts with transcription factor SWI6. Requires Mg(2+) as cofactor.

It carries out the reaction L-seryl-[protein] + ATP = O-phospho-L-seryl-[protein] + ADP + H(+). The catalysed reaction is L-threonyl-[protein] + ATP = O-phospho-L-threonyl-[protein] + ADP + H(+). Mitogen-activated protein kinase; part of the MCK1-MKK2-MPS1 MAP kinase (MAPK) signal transduction cascade that is essential for cell wall integrity and plant infection, but not for plant defense responses. Beside its role in pathogenesis, the MPS1 cascade is active in conidiation and cellular stress responses. Targets downstream of the MPS1-MAPK pathway include transcription factors MIG1 and SWI6, as well as GSK1 and MPG1. The chain is Mitogen-activated protein kinase MPS1 from Pyricularia oryzae (strain 70-15 / ATCC MYA-4617 / FGSC 8958) (Rice blast fungus).